The sequence spans 165 residues: MKMVGRAWKFGDDISTDHITPGRYYHLRSNMPELAKHVMEDADPDFMKKFRPGDFIVAGKNFGMGSSREHAPLALKIAGVSAVIAKSFARIFYRNAINVGLPVLIADTDSIDSGDELEVDLGKGLVVNRTKGIEIRVKPIPEVMLKILHEGGLVSYVKKHGDIKI.

The protein belongs to the LeuD family. LeuD type 2 subfamily. Heterodimer of LeuC and LeuD.

It carries out the reaction (2R,3S)-3-isopropylmalate = (2S)-2-isopropylmalate. Its pathway is amino-acid biosynthesis; L-leucine biosynthesis; L-leucine from 3-methyl-2-oxobutanoate: step 2/4. In terms of biological role, catalyzes the isomerization between 2-isopropylmalate and 3-isopropylmalate, via the formation of 2-isopropylmaleate. In Archaeoglobus fulgidus (strain ATCC 49558 / DSM 4304 / JCM 9628 / NBRC 100126 / VC-16), this protein is 3-isopropylmalate dehydratase small subunit 2 (leuD2).